We begin with the raw amino-acid sequence, 496 residues long: Lysine--tRNA ligase (496 aa).

Mg(2+) is bound by residues Glu403 and Glu410.

This sequence belongs to the class-II aminoacyl-tRNA synthetase family. In terms of assembly, homodimer. The cofactor is Mg(2+).

The protein resides in the cytoplasm. The enzyme catalyses tRNA(Lys) + L-lysine + ATP = L-lysyl-tRNA(Lys) + AMP + diphosphate. This chain is Lysine--tRNA ligase, found in Aster yellows witches'-broom phytoplasma (strain AYWB).